The primary structure comprises 106 residues: UPF0145 protein BDI_2732 (106 aa).

This sequence belongs to the UPF0145 family.

The protein is UPF0145 protein BDI_2732 of Parabacteroides distasonis (strain ATCC 8503 / DSM 20701 / CIP 104284 / JCM 5825 / NCTC 11152).